Here is a 495-residue protein sequence, read N- to C-terminus: 1-aminocyclopropane-1-carboxylate synthase 6 (495 aa).

Positions 58 and 96 each coordinate substrate. At K280 the chain carries N6-(pyridoxal phosphate)lysine. 3 positions are modified to phosphoserine: S480, S483, and S488.

The protein belongs to the class-I pyridoxal-phosphate-dependent aminotransferase family. As to quaternary structure, homodimer and heterodimer. In vivo, the relevance of heterodimerization with other ACS enzymes is however unsure. Interacts with GRF3. Pyridoxal 5'-phosphate is required as a cofactor. Post-translationally, phosphorylated on serine residue by MAP kinase (MPK6). May be processed at its C-terminus. Expressed in roots and flowers.

The enzyme catalyses S-adenosyl-L-methionine = 1-aminocyclopropane-1-carboxylate + S-methyl-5'-thioadenosine + H(+). Its pathway is alkene biosynthesis; ethylene biosynthesis via S-adenosyl-L-methionine; ethylene from S-adenosyl-L-methionine: step 1/2. In terms of biological role, 1-aminocyclopropane-1-carboxylate synthase (ACS) enzymes catalyze the conversion of S-adenosyl-L-methionine (SAM) into 1-aminocyclopropane-1-carboxylate (ACC), a direct precursor of ethylene. Involved in bacterial flagellin-induced ethylene production. The sequence is that of 1-aminocyclopropane-1-carboxylate synthase 6 (ACS6) from Arabidopsis thaliana (Mouse-ear cress).